A 126-amino-acid chain; its full sequence is Major sperm protein 1 (126 aa).

At Ala2 the chain carries N-acetylalanine. The MSP domain occupies 8–125; the sequence is DIATMPAQKV…RRKNLPIEYN (118 aa).

As to expression, sperm.

It localises to the cell projection. The protein resides in the pseudopodium. It is found in the cytoplasm. The protein localises to the cytoskeleton. In terms of biological role, central component in molecular interactions underlying sperm crawling. Forms an extensive filament system that extends from sperm villipoda, along the leading edge of the pseudopod. This is Major sperm protein 1 (MSP-1) from Globodera rostochiensis (Golden nematode worm).